Reading from the N-terminus, the 171-residue chain is Methylated-DNA--protein-cysteine methyltransferase (171 aa).

The active-site Nucleophile; methyl group acceptor is cysteine 139.

It belongs to the MGMT family.

It localises to the cytoplasm. The enzyme catalyses a 6-O-methyl-2'-deoxyguanosine in DNA + L-cysteinyl-[protein] = S-methyl-L-cysteinyl-[protein] + a 2'-deoxyguanosine in DNA. It carries out the reaction a 4-O-methyl-thymidine in DNA + L-cysteinyl-[protein] = a thymidine in DNA + S-methyl-L-cysteinyl-[protein]. Its function is as follows. Involved in the cellular defense against the biological effects of O6-methylguanine (O6-MeG) and O4-methylthymine (O4-MeT) in DNA. Repairs the methylated nucleobase in DNA by stoichiometrically transferring the methyl group to a cysteine residue in the enzyme. This is a suicide reaction: the enzyme is irreversibly inactivated. This Salmonella typhi protein is Methylated-DNA--protein-cysteine methyltransferase.